Reading from the N-terminus, the 195-residue chain is Obelin (195 aa).

The propeptide occupies 1–6; the sequence is MASKYA. EF-hand domains follow at residues 17 to 52, 53 to 88, 110 to 145, and 146 to 181; these read KWIK…DICK, NLGA…FPEF, LIRE…SGIS, and PSEE…FWYT. Residues Asp-30, Asn-32, Asn-34, Gln-36, and Glu-41 each coordinate Ca(2+). Ca(2+) contacts are provided by Asp-123, Asp-125, Ser-127, Thr-129, Glu-134, Asp-159, Asp-161, Ser-163, Glu-165, and Glu-170.

It belongs to the aequorin family.

Ca(2+)-dependent bioluminescence photoprotein. Displays an emission peak at 495 nm (blue light). Trace amounts of calcium ion trigger the intramolecular oxidation of the chromophore, coelenterazine into coelenteramide and CO(2) with the concomitant emission of light. In Obelia geniculata (Knotted thread hydroid), this protein is Obelin.